The primary structure comprises 552 residues: Two-component response regulator ARR10 (552 aa).

Positions 18–133 constitute a Response regulatory domain; sequence RVLAVDDDQT…ELKNIWQHVV (116 aa). Position 69 is a 4-aspartylphosphate (Asp69). The tract at residues 139–181 is disordered; the sequence is KKNKSNVSNGSGNCDKANRKRKEQYEEEEEEERGNDNDDPTAQ. A coiled-coil region spans residues 151-173; sequence NCDKANRKRKEQYEEEEEEERGN. Residues 163 to 177 show a composition bias toward acidic residues; sequence YEEEEEEERGNDNDD. A Nuclear localization signal motif is present at residues 182–185; it reads KKPR. Positions 185–235 form a DNA-binding region, myb-like GARP; it reads RVLWTHELHNKFLAAVDHLGVERAVPKKILDLMNVDKLTRENVASHLQKFR.

The protein belongs to the ARR family. Type-B subfamily. In terms of assembly, binds the target DNA as a monomer. Two-component system major event consists of a His-to-Asp phosphorelay between a sensor histidine kinase (HK) and a response regulator (RR). In plants, the His-to-Asp phosphorelay involves an additional intermediate named Histidine-containing phosphotransfer protein (HPt). This multistep phosphorelay consists of a His-Asp-His-Asp sequential transfer of a phosphate group between first a His and an Asp of the HK protein, followed by the transfer to a conserved His of the HPt protein and finally the transfer to an Asp in the receiver domain of the RR protein. As to expression, detected in the whole plant. Predominantly expressed in roots and leaves.

The protein resides in the nucleus. Its function is as follows. Transcriptional activator that binds specifically to the DNA sequence 5'-[AG]GATT-3'. Functions as a response regulator involved in His-to-Asp phosphorelay signal transduction system. Phosphorylation of the Asp residue in the receiver domain activates the ability of the protein to promote the transcription of target genes. Could directly activate some type-A response regulators in response to cytokinins. The polypeptide is Two-component response regulator ARR10 (ARR10) (Arabidopsis thaliana (Mouse-ear cress)).